The chain runs to 695 residues: UvrABC system protein C (695 aa).

The span at 1 to 10 shows a compositional bias: basic and acidic residues; sequence MNQDPAETRD. Residues 1-53 are disordered; the sequence is MNQDPAETRDTAAPPPADTTSPSPVSPELEPRSAPGAQDIDAASASLTVDEDD. Residues 18–27 are compositionally biased toward low complexity; sequence DTTSPSPVSP. One can recognise a GIY-YIG domain in the interval 88-166; that stretch reads TSPGVYRMLN…IKQLRPRFNV (79 aa). A UVR domain is found at 276 to 311; that stretch reads RAVKQELAVEMEKASNELEFETAALYRDRLAALSAI.

This sequence belongs to the UvrC family. As to quaternary structure, interacts with UvrB in an incision complex.

Its subcellular location is the cytoplasm. Its function is as follows. The UvrABC repair system catalyzes the recognition and processing of DNA lesions. UvrC both incises the 5' and 3' sides of the lesion. The N-terminal half is responsible for the 3' incision and the C-terminal half is responsible for the 5' incision. In Rhodopseudomonas palustris (strain BisB5), this protein is UvrABC system protein C.